The primary structure comprises 293 residues: Formamidopyrimidine-DNA glycosylase (293 aa).

The active-site Schiff-base intermediate with DNA is Pro2. Glu3 serves as the catalytic Proton donor. The Proton donor; for beta-elimination activity role is filled by Lys58. His104, Arg127, and Arg170 together coordinate DNA. Residues 257-293 (SVYGREGKPCRNPACGGTVERVVQSGRSTFFCASCQT) form an FPG-type zinc finger. The Proton donor; for delta-elimination activity role is filled by Arg283.

This sequence belongs to the FPG family. Monomer. The cofactor is Zn(2+).

The catalysed reaction is Hydrolysis of DNA containing ring-opened 7-methylguanine residues, releasing 2,6-diamino-4-hydroxy-5-(N-methyl)formamidopyrimidine.. The enzyme catalyses 2'-deoxyribonucleotide-(2'-deoxyribose 5'-phosphate)-2'-deoxyribonucleotide-DNA = a 3'-end 2'-deoxyribonucleotide-(2,3-dehydro-2,3-deoxyribose 5'-phosphate)-DNA + a 5'-end 5'-phospho-2'-deoxyribonucleoside-DNA + H(+). In terms of biological role, involved in base excision repair of DNA damaged by oxidation or by mutagenic agents. Acts as a DNA glycosylase that recognizes and removes damaged bases. Has a preference for oxidized purines, such as 7,8-dihydro-8-oxoguanine (8-oxoG). Has AP (apurinic/apyrimidinic) lyase activity and introduces nicks in the DNA strand. Cleaves the DNA backbone by beta-delta elimination to generate a single-strand break at the site of the removed base with both 3'- and 5'-phosphates. The sequence is that of Formamidopyrimidine-DNA glycosylase from Brucella ovis (strain ATCC 25840 / 63/290 / NCTC 10512).